A 90-amino-acid polypeptide reads, in one-letter code: Phosphocarrier protein NPr (90 aa).

The 89-residue stretch at 2 to 90 (TQYRRVAIKN…ALFESGFDED (89 aa)) folds into the HPr domain. Histidine 16 acts as the Pros-phosphohistidine intermediate in catalysis.

The protein belongs to the HPr family.

The protein localises to the cytoplasm. Functionally, component of the phosphoenolpyruvate-dependent nitrogen-metabolic phosphotransferase system (nitrogen-metabolic PTS), that seems to be involved in regulating nitrogen metabolism. The phosphoryl group from phosphoenolpyruvate (PEP) is transferred to the phosphoryl carrier protein NPr by enzyme I-Ntr. Phospho-NPr then transfers it to EIIA-Ntr. Could function in the transcriptional regulation of sigma-54 dependent operons in conjunction with the NPr (PtsO) and EIIA-Ntr (PtsN) proteins. This is Phosphocarrier protein NPr (ptsO) from Proteus mirabilis (strain HI4320).